The sequence spans 357 residues: DNA integrity scanning protein DisA (357 aa).

The DAC domain maps to 8–148 (PQELIEKIKL…NYKYVVNQVD (141 aa)). Positions 76, 94, 107, 111, and 128 each coordinate 3',3'-c-di-AMP.

Belongs to the DisA family. Homooctamer. Mg(2+) serves as cofactor.

The enzyme catalyses 2 ATP = 3',3'-c-di-AMP + 2 diphosphate. Its activity is regulated as follows. Inhibited by 3'-dATP. Participates in a DNA-damage check-point. DisA forms globular foci that rapidly scan along the chromosomes searching for lesions. In terms of biological role, has diadenylate cyclase activity, catalyzing the condensation of 2 ATP molecules into cyclic di-AMP (c-di-AMP). c-di-AMP likely acts as a signaling molecule that may couple DNA integrity with a cellular process. This rate-limiting step is the accessibility of the active site; mutating the possible exit tunnel (residues 128-130) increases product 2-fold despite Arg-130 being important for ATP-binding. Does not convert GTP to c-di-GMP. In Thermotoga maritima (strain ATCC 43589 / DSM 3109 / JCM 10099 / NBRC 100826 / MSB8), this protein is DNA integrity scanning protein DisA.